Reading from the N-terminus, the 513-residue chain is Pantetheinase (513 aa).

An N-terminal signal peptide occupies residues 1 to 22 (MITSPLLAYVAILFFCVLKASS). One can recognise a CN hydrolase domain in the interval 40–307 (APLTPVSHEE…GKLLLSQLDS (268 aa)). Catalysis depends on Glu-80, which acts as the Proton acceptor. A glycan (N-linked (GlcNAc...) asparagine) is linked at Asn-147. Lys-179 functions as the Proton donor in the catalytic mechanism. Catalysis depends on Cys-212, which acts as the Nucleophile. N-linked (GlcNAc...) asparagine glycans are attached at residues Asn-315 and Asn-353. Gly-487 carries the GPI-anchor amidated glycine lipid modification. Positions 488–513 (ASADLVAQGLRVMLGVIITIMYSLSW) are cleaved as a propeptide — removed in mature form.

This sequence belongs to the carbon-nitrogen hydrolase superfamily. BTD/VNN family. As to quaternary structure, monomer. As to expression, detected in kidney (at protein level).

It localises to the cell membrane. It carries out the reaction (R)-pantetheine + H2O = cysteamine + (R)-pantothenate. Amidohydrolase that hydrolyzes specifically one of the carboamide linkages in D-pantetheine thus recycling pantothenic acid (vitamin B5) and releasing cysteamine. In Sus scrofa (Pig), this protein is Pantetheinase (VNN1).